Here is a 436-residue protein sequence, read N- to C-terminus: UPF0597 protein YhaM (436 aa).

It belongs to the UPF0597 family.

Its function is as follows. Thought to be a D-serine dehydratase, however it does not complement a dsdA (D-serine dehydratase) mutant in strain CFT073, suggesting it may not have that function. The chain is UPF0597 protein YhaM from Escherichia coli O157:H7.